A 624-amino-acid chain; its full sequence is Membrane protein insertase YidC (624 aa).

Residues 8–28 (MIIAIALSLAVLLGWNYFVTA) form a helical membrane-spanning segment. The tract at residues 36–95 (QQQAAQVNPSQGVNPSQGVDPSQGVNASPSPKEGGPSAPVPGTLPGAAGGSPQAALARDE) is disordered. Positions 43 to 64 (NPSQGVNPSQGVDPSQGVNASP) are enriched in polar residues. 5 helical membrane passes run 370–390 (FDLLIDWGWFYFITKPMFKAL), 396–416 (LFGNFGVSILVVTLILKLFFL), 470–490 (WPVLIQIPVFFSLYKVLFVTI), 526–542 (LLHLGVWPIVMGITMFL), and 559–579 (FTFMPIIFTFMLGSFPAGLVI).

It belongs to the OXA1/ALB3/YidC family. Type 1 subfamily. As to quaternary structure, interacts with the Sec translocase complex via SecD. Specifically interacts with transmembrane segments of nascent integral membrane proteins during membrane integration.

It is found in the cell inner membrane. Its function is as follows. Required for the insertion and/or proper folding and/or complex formation of integral membrane proteins into the membrane. Involved in integration of membrane proteins that insert both dependently and independently of the Sec translocase complex, as well as at least some lipoproteins. Aids folding of multispanning membrane proteins. The polypeptide is Membrane protein insertase YidC (Methylobacterium sp. (strain 4-46)).